The sequence spans 513 residues: Ribonuclease Y (513 aa).

The helical transmembrane segment at 4–24 threads the bilayer; the sequence is NTAIIIAITTGFVAFIGGYFL. Positions 203-266 constitute a KH domain; the sequence is TVAVIPLPNE…ETARMALEKL (64 aa). The 94-residue stretch at 329–422 folds into the HD domain; sequence VLKHSVEVAY…IQAADAISAA (94 aa).

The protein belongs to the RNase Y family.

The protein resides in the cell membrane. Endoribonuclease that initiates mRNA decay. In Desulforudis audaxviator (strain MP104C), this protein is Ribonuclease Y.